The chain runs to 238 residues: Probable 2-phosphosulfolactate phosphatase (238 aa).

This sequence belongs to the ComB family. Mg(2+) is required as a cofactor.

The catalysed reaction is (2R)-O-phospho-3-sulfolactate + H2O = (2R)-3-sulfolactate + phosphate. The polypeptide is Probable 2-phosphosulfolactate phosphatase (Clostridium beijerinckii (strain ATCC 51743 / NCIMB 8052) (Clostridium acetobutylicum)).